A 207-amino-acid polypeptide reads, in one-letter code: Protein GrpE (207 aa).

A compositionally biased stretch (basic and acidic residues) spans 1–11 (MTETDGQKDNN). The segment at 1-40 (MTETDGQKDNNQDTAQAAADPVVSKPYIMPDDPEEGSNEA) is disordered.

Belongs to the GrpE family. In terms of assembly, homodimer.

The protein localises to the cytoplasm. Functionally, participates actively in the response to hyperosmotic and heat shock by preventing the aggregation of stress-denatured proteins, in association with DnaK and GrpE. It is the nucleotide exchange factor for DnaK and may function as a thermosensor. Unfolded proteins bind initially to DnaJ; upon interaction with the DnaJ-bound protein, DnaK hydrolyzes its bound ATP, resulting in the formation of a stable complex. GrpE releases ADP from DnaK; ATP binding to DnaK triggers the release of the substrate protein, thus completing the reaction cycle. Several rounds of ATP-dependent interactions between DnaJ, DnaK and GrpE are required for fully efficient folding. This is Protein GrpE from Rhodopseudomonas palustris (strain ATCC BAA-98 / CGA009).